Consider the following 178-residue polypeptide: Aspartic proteinase nepenthesin-2 (178 aa).

Residue Asp98 is part of the active site.

It belongs to the peptidase A1 family.

Its subcellular location is the secreted. The catalysed reaction is Similar to pepsin, but also cleaves on either side of Asp and at Lys-|-Arg.. With respect to regulation, inhibited by pepstatin and by diazoacetyl-D,L-norleucine methyl ester (DAN) in the presence of Cu(2+) ions. Extracellular proteinase found in the pitcher fluid of carnivorous plants. Digest prey for nitrogen uptake. The sequence is that of Aspartic proteinase nepenthesin-2 from Nepenthes distillatoria (Pitcher plant).